The primary structure comprises 361 residues: Molybdopterin synthase catalytic subunit (361 aa).

Substrate contacts are provided by residues 101 to 102 (HR), Lys117, and 124 to 126 (KKE).

It belongs to the MoaE family. MOCS2B subfamily. As to quaternary structure, heterotetramer; composed of 2 small (Mocs2A) and 2 large (Mocs2B) subunits.

It localises to the cytoplasm. The catalysed reaction is 2 [molybdopterin-synthase sulfur-carrier protein]-C-terminal-Gly-aminoethanethioate + cyclic pyranopterin phosphate + H2O = molybdopterin + 2 [molybdopterin-synthase sulfur-carrier protein]-C-terminal Gly-Gly + 2 H(+). Its pathway is cofactor biosynthesis; molybdopterin biosynthesis. Functionally, catalytic subunit of the molybdopterin synthase complex, a complex that catalyzes the conversion of precursor Z into molybdopterin. Acts by mediating the incorporation of 2 sulfur atoms from thiocarboxylated Mocs2A into precursor Z to generate a dithiolene group. In Drosophila persimilis (Fruit fly), this protein is Molybdopterin synthase catalytic subunit.